The following is a 209-amino-acid chain: Translation initiation factor 2 subunit beta (209 aa).

The TRAM domain maps to Thr144–Glu202.

Belongs to the eIF-2-beta/eIF-5 family. In terms of assembly, heterotrimer composed of an alpha, a beta and a gamma chain.

Functionally, eIF-2 functions in the early steps of protein synthesis by forming a ternary complex with GTP and initiator tRNA. In Thermoplasma acidophilum (strain ATCC 25905 / DSM 1728 / JCM 9062 / NBRC 15155 / AMRC-C165), this protein is Translation initiation factor 2 subunit beta (eif2b).